Reading from the N-terminus, the 142-residue chain is Large ribosomal subunit protein uL22c (142 aa).

It belongs to the universal ribosomal protein uL22 family. Part of the 50S ribosomal subunit.

The protein localises to the plastid. It is found in the chloroplast. In terms of biological role, this protein binds specifically to 23S rRNA. Its function is as follows. The globular domain of the protein is located near the polypeptide exit tunnel on the outside of the subunit, while an extended beta-hairpin is found that lines the wall of the exit tunnel in the center of the 70S ribosome. This is Large ribosomal subunit protein uL22c (rpl22) from Picea abies (Norway spruce).